Here is a 424-residue protein sequence, read N- to C-terminus: Inositol phosphosphingolipids phospholipase C (424 aa).

Mg(2+) is bound at residue E49. H289 serves as the catalytic Proton acceptor. Helical transmembrane passes span 335–357 (LRIAHLLISIPLIIGVHVAIAWC) and 364–386 (VIILFFTVMLTIAAVVNGFCIGL).

Belongs to the neutral sphingomyelinase family. It depends on Mg(2+) as a cofactor.

Its subcellular location is the cell membrane. The protein resides in the endoplasmic reticulum membrane. It functions in the pathway lipid metabolism; sphingolipid metabolism. Functionally, inositol phosphosphingolipids phospholipase essential for the coordination of cell wall formation. Responsible for the hydrolysis of the phosphosphingolipids (IPS), inositol phosphorylceramide (IPC), mannosylinositol phosphorylceramide (MIPC), and mannosyldiinositol phosphorylceramide (M(IP)2C). In Schizosaccharomyces pombe (strain 972 / ATCC 24843) (Fission yeast), this protein is Inositol phosphosphingolipids phospholipase C (css1).